A 277-amino-acid chain; its full sequence is Hydroxyethylthiazole kinase (277 aa).

Residue Met55 coordinates substrate. Positions 130 and 176 each coordinate ATP. Gly203 is a binding site for substrate.

It belongs to the Thz kinase family. Mg(2+) serves as cofactor.

The enzyme catalyses 5-(2-hydroxyethyl)-4-methylthiazole + ATP = 4-methyl-5-(2-phosphooxyethyl)-thiazole + ADP + H(+). It participates in cofactor biosynthesis; thiamine diphosphate biosynthesis; 4-methyl-5-(2-phosphoethyl)-thiazole from 5-(2-hydroxyethyl)-4-methylthiazole: step 1/1. Catalyzes the phosphorylation of the hydroxyl group of 4-methyl-5-beta-hydroxyethylthiazole (THZ). In Cutibacterium acnes (strain DSM 16379 / KPA171202) (Propionibacterium acnes), this protein is Hydroxyethylthiazole kinase.